The primary structure comprises 66 residues: Small ribosomal subunit protein eS27 (66 aa).

The Zn(2+) site is built by C21, C24, C40, and C43. The segment at 21-43 (CPNCGNEQTIFSHATFPVRCLSC) adopts a C4-type zinc-finger fold.

It belongs to the eukaryotic ribosomal protein eS27 family. As to quaternary structure, part of the 30S ribosomal subunit. The cofactor is Zn(2+).

The polypeptide is Small ribosomal subunit protein eS27 (Saccharolobus solfataricus (strain ATCC 35092 / DSM 1617 / JCM 11322 / P2) (Sulfolobus solfataricus)).